Here is a 277-residue protein sequence, read N- to C-terminus: MSKALANMPGDDYFRHPPVFDTYAEHRAYLKFRHAVALRHFARLGFDQDGLAGLITVADPEHADTYWANPLAHPFSTITPADLIRVDGDSTETVDGQRRVNIAAFNIHAEIHRARPDVQAVIHLHTVYGRAFSAFARKLPPLTQDACPFFEDHEVFDDYTGLVLAKDDGRRIAKQLRGHKAILLKNHGLVTVGETLDAAAWWFTLLDTCCHVQLLADAAGGAEPIPAEVARLTGQQLGSHLLGWNSYQPLHEATLARNPDLAAMAPALPPQTPALAR.

It belongs to the aldolase class II family. Homotetramer. Fe(2+) serves as cofactor.

The enzyme catalyses 3-dimethylallyl-4-hydroxyphenylpyruvate + O2 = 3-dimethylallyl-4-hydroxymandelate + CO2. It catalyses the reaction 3-dimethylallyl-4-hydroxymandelate + O2 = 3-dimethylallyl-4-hydroxybenzoate + CO2 + H2O. Its pathway is antibiotic biosynthesis. With respect to regulation, activated by ascorbate. Involved in the biosynthesis of ring A of the aminocoumarin antibiotic clorobiocin. Catalyzes two consecutive oxidative decarboxylations of 3-dimethylallyl-4-hydroxyphenylpyruvate (3DMA-4HPP) to yield 3-dimethylallyl-4-hydroxybenzoate (3DMA-4HB) via the 3-dimethylallyl-4-hydroxymandelic acid (3DMA-4HMA) intermediate. This is 4-hydroxy-3-prenylphenylpyruvate oxygenase/4-hydroxy-3-prenylbenzoate synthase from Streptomyces roseochromogenus subsp. oscitans.